We begin with the raw amino-acid sequence, 236 residues long: Ribosome assembly factor mrt4 (236 aa).

This sequence belongs to the universal ribosomal protein uL10 family. As to quaternary structure, associates with the pre-60S ribosomal particle.

The protein localises to the nucleus. The protein resides in the nucleolus. It localises to the cytoplasm. Functionally, component of the ribosome assembly machinery. Nuclear paralog of the ribosomal protein P0, it binds pre-60S subunits at an early stage of assembly in the nucleolus, and is replaced by P0 in cytoplasmic pre-60S subunits and mature 80S ribosomes. The protein is Ribosome assembly factor mrt4 of Eremothecium gossypii (strain ATCC 10895 / CBS 109.51 / FGSC 9923 / NRRL Y-1056) (Yeast).